A 187-amino-acid polypeptide reads, in one-letter code: Large ribosomal subunit protein bL25 (187 aa).

The protein belongs to the bacterial ribosomal protein bL25 family. CTC subfamily. Part of the 50S ribosomal subunit; part of the 5S rRNA/L5/L18/L25 subcomplex. Contacts the 5S rRNA. Binds to the 5S rRNA independently of L5 and L18.

Functionally, this is one of the proteins that binds to the 5S RNA in the ribosome where it forms part of the central protuberance. In Tropheryma whipplei (strain TW08/27) (Whipple's bacillus), this protein is Large ribosomal subunit protein bL25.